The sequence spans 1000 residues: ATP-dependent DNA/RNA helicase DHX36 (1000 aa).

Residues 1 to 43 (MSYDYHQSWSRDGGPRGSGQGSGGGGGGSRGSGGGGGGRGGRG) form a required for recruitment to cytoplasmic stress granules region. A disordered region spans residues 1–53 (MSYDYHQSWSRDGGPRGSGQGSGGGGGGSRGSGGGGGGRGGRGRHPAHLKGRE). The tract at residues 1–96 (MSYDYHQSWS…IVQLLNSVQA (96 aa)) is required for the pre-miR-134 transport. The segment at 1–192 (MSYDYHQSWS…KKTDPRYIEM (192 aa)) is necessary for nuclear and nucleolar caps localizations. A compositionally biased stretch (gly residues) spans 15–40 (PRGSGQGSGGGGGGSRGSGGGGGGRG). The tract at residues 45–67 (HPAHLKGREIGLWYAKKQTQKNK) is DSM (DHX36-specific motif). The required for G4-DNA- and G4-RNA-binding stretch occupies residues 45 to 97 (HPAHLKGREIGLWYAKKQTQKNKEAERQERAVVHMDERREEQIVQLLNSVQAK). 2 recA-like domain regions span residues 98–378 (NDKD…MIHI) and 379–620 (PGFT…DYQL). Position 153 is a phosphoserine (Ser153). The Helicase ATP-binding domain occupies 209–379 (VNLINNHQVT…FGNCPMIHIP (171 aa)). 225–230 (GCGKTT) is an ATP binding site. Positions 257-309 (RRISAISVAERVAAERAESCGNGNSTGYQIRLQSRLPRKQGSILYCTTGIILQ) are necessary for interaction with single-stranded DNA at the 3'-end of the G4-DNA structure. Positions 326 to 329 (DEIH) match the DEAH box motif. 2 residues coordinate Mg(2+): Glu327 and His329. The Helicase C-terminal domain occupies 469–639 (ALIRYIVLEE…ELCLQIKILR (171 aa)). Positions 490–549 (WDNISTLHDLLMSQVMFKSDRFLIIPLHSLMPTVNQTQVFKKTPPGVRKIVIATNIAETS) are necessary for interaction with single-stranded DNA at the 3'-end of the G4-DNA structure. Residues 509–520 (DRFLIIPLHSLM) carry the Nuclear localization signal motif. Residues Ser549 and 594 to 597 (RAGR) each bind ATP. The WH domain stretch occupies residues 621-690 (PEILRTPLEE…LGVHLARLPV (70 aa)). Necessary for interaction with single-stranded DNA at the 3'-end of the G4-DNA structure regions lie at residues 630–689 (ELCL…ARLP), 841–852 (NLGKKRKMVKVH), and 862–892 (HPKS…IYLY). Positions 833–897 (PKVAKIRLNL…SIYLYDCTEV (65 aa)) are OB-fold-like subdomains. An N6-acetyllysine modification is found at Lys939.

In terms of assembly, found in a multi-helicase-TICAM1 complex at least composed of DHX36, DDX1, DDX21 and TICAM1; this complex exists in resting cells with or without dsRNA poly(I:C) ligand stimulation. Interacts (via C-terminus) with TICAM1 (via TIR domain). Interacts (via C-terminus) with DDX21; this interaction serves as bridges to TICAM1. Interacts with TERT; this interaction is dependent on the ability of DHX36 to bind to the G-quadruplex RNA (G4-RNA) structure present in the telomerase RNA template component (TERC). Interacts with DKC1; this interaction is dependent on the ability of DHX36 to bind to the G4-RNA structure present in TERC. Interacts with PARN; this interaction stimulates PARN to enhance uPA mRNA decay. Interacts with EXOSC3; this interaction occurs in a RNase-insensitive manner. Interacts with EXOSC10; this interaction occurs in a RNase-insensitive manner. Interacts with ILF3; this interaction occurs in a RNA-dependent manner. Interacts with ELAVL1; this interaction occurs in an RNA-dependent manner. Interacts with DDX5; this interaction occurs in a RNA-dependent manner. Interacts with DDX17; this interaction occurs in a RNA-dependent manner. Interacts with HDAC1; this interaction occurs in a RNA-dependent manner. Interacts with HDAC3; this interaction occurs in a RNA-dependent manner. Interacts with HDAC4. Interacts with AGO1. Interacts with AGO2. Interacts with ERCC6. Requires Mg(2+) as cofactor.

It localises to the nucleus. Its subcellular location is the cytoplasm. The protein localises to the cytosol. The protein resides in the stress granule. It is found in the nucleus speckle. It localises to the chromosome. Its subcellular location is the telomere. The protein localises to the mitochondrion. The protein resides in the perikaryon. It is found in the cell projection. It localises to the dendrite. Its subcellular location is the axon. The catalysed reaction is ATP + H2O = ADP + phosphate + H(+). ATPase activity is enhanced in the presence of homomeric poly(U) RNAs, but not by double-stranded DNA (dsDNA), double-stranded RNA (dsRNA) and tRNA. Its function is as follows. Multifunctional ATP-dependent helicase that unwinds G-quadruplex (G4) structures. Plays a role in many biological processes such as genomic integrity, gene expression regulations and as a sensor to initiate antiviral responses. G4 structures correspond to helical structures containing guanine tetrads. Binds with high affinity to and unwinds G4 structures that are formed in nucleic acids (G4-DNA and G4-RNA). Plays a role in genomic integrity. Converts the G4-RNA structure present in telomerase RNA template component (TREC) into a double-stranded RNA to promote P1 helix formation that acts as a template boundary ensuring accurate reverse transcription. Plays a role in transcriptional regulation. Resolves G4-DNA structures in promoters of genes, such as YY1, KIT/c-kit and ALPL and positively regulates their expression. Plays a role in post-transcriptional regulation. Unwinds a G4-RNA structure located in the 3'-UTR polyadenylation site of the pre-mRNA TP53 and stimulates TP53 pre-mRNA 3'-end processing in response to ultraviolet (UV)-induced DNA damage. Binds to the precursor-microRNA-134 (pre-miR-134) terminal loop and regulates its transport into the synapto-dendritic compartment. Involved in the pre-miR-134-dependent inhibition of target gene expression and the control of dendritic spine size. Plays a role in the regulation of cytoplasmic mRNA translation and mRNA stability. Binds to both G4-RNA structures and alternative non-quadruplex-forming sequence within the 3'-UTR of the PITX1 mRNA regulating negatively PITX1 protein expression. Binds to both G4-RNA structure in the 5'-UTR and AU-rich elements (AREs) localized in the 3'-UTR of NKX2-5 mRNA to either stimulate protein translation or induce mRNA decay in an ELAVL1-dependent manner, respectively. Also binds to ARE sequences present in several mRNAs mediating exosome-mediated 3'-5' mRNA degradation. Involved in cytoplasmic urokinase-type plasminogen activator (uPA) mRNA decay. Component of a multi-helicase-TICAM1 complex that acts as a cytoplasmic sensor of viral double-stranded RNA (dsRNA) and plays a role in the activation of a cascade of antiviral responses including the induction of pro-inflammatory cytokines via the adapter molecule TICAM1. Required for the early embryonic development and hematopoiesis. Involved in the regulation of cardioblast differentiation and proliferation during heart development. Involved in spermatogonia differentiation. May play a role in ossification. This is ATP-dependent DNA/RNA helicase DHX36 from Rattus norvegicus (Rat).